Consider the following 337-residue polypeptide: Putative [LysW]-lysine/[LysW]-ornithine hydrolase (337 aa).

Residue His-67 participates in Zn(2+) binding. The active site involves Asp-69. Asp-91 lines the Zn(2+) pocket. Residue Glu-118 is the Proton acceptor of the active site. Residues Glu-119, Glu-140, and His-298 each contribute to the Zn(2+) site.

The protein belongs to the peptidase M20A family. LysK subfamily. Zn(2+) serves as cofactor. Requires Co(2+) as cofactor.

The protein resides in the cytoplasm. It carries out the reaction [amino-group carrier protein]-C-terminal-gamma-(L-lysyl)-L-glutamate + H2O = [amino-group carrier protein]-C-terminal-L-glutamate + L-lysine. The enzyme catalyses [amino-group carrier protein]-C-terminal-gamma-(L-ornithyl)-L-glutamate + H2O = [amino-group carrier protein]-C-terminal-L-glutamate + L-ornithine. Its pathway is amino-acid biosynthesis; L-lysine biosynthesis via AAA pathway; L-lysine from L-alpha-aminoadipate (Thermus route): step 5/5. It participates in amino-acid biosynthesis; L-arginine biosynthesis. Functionally, catalyzes the release of L-lysine from [LysW]-gamma-L-lysine and the release of L-ornithine from [LysW]-L-ornithine. The polypeptide is Putative [LysW]-lysine/[LysW]-ornithine hydrolase (Pyrococcus abyssi (strain GE5 / Orsay)).